The following is an 88-amino-acid chain: Large ribosomal subunit protein bL27 (88 aa).

Positions 1 to 24 (MAHKKGTGSTRNGRDSNAKRLGVK) are disordered.

This sequence belongs to the bacterial ribosomal protein bL27 family.

The sequence is that of Large ribosomal subunit protein bL27 from Synechococcus sp. (strain CC9605).